A 124-amino-acid chain; its full sequence is Pal-related lipoprotein (124 aa).

Residues M1–G18 form the signal peptide. A lipid anchor (N-palmitoyl cysteine) is attached at C19. C19 carries S-diacylglycerol cysteine lipidation.

It localises to the cell membrane. The chain is Pal-related lipoprotein (slp) from Bacillus subtilis (strain 168).